The chain runs to 193 residues: Ribosomal RNA large subunit methyltransferase E (193 aa).

S-adenosyl-L-methionine contacts are provided by glycine 48, phenylalanine 50, aspartate 67, asparagine 85, and aspartate 107. The active-site Proton acceptor is the lysine 147.

Belongs to the class I-like SAM-binding methyltransferase superfamily. RNA methyltransferase RlmE family.

Its subcellular location is the cytoplasm. It carries out the reaction uridine(2552) in 23S rRNA + S-adenosyl-L-methionine = 2'-O-methyluridine(2552) in 23S rRNA + S-adenosyl-L-homocysteine + H(+). Functionally, specifically methylates the uridine in position 2552 of 23S rRNA at the 2'-O position of the ribose in the fully assembled 50S ribosomal subunit. This Borrelia duttonii (strain Ly) protein is Ribosomal RNA large subunit methyltransferase E.